The primary structure comprises 632 residues: Extracellular metalloproteinase 2 (632 aa).

The signal sequence occupies residues 1 to 19 (MHGLLLAGLAAALPLGVAG). The propeptide occupies 20-244 (LPARQQSGLS…VHNVVDYVAS (225 aa)). N-linked (GlcNAc...) asparagine glycosylation occurs at asparagine 270. Histidine 429 contributes to the Zn(2+) binding site. Residue glutamate 430 is part of the active site. Histidine 433 is a Zn(2+) binding site.

The protein belongs to the peptidase M36 family. The cofactor is Zn(2+).

The protein resides in the secreted. Its function is as follows. Secreted metalloproteinase probably acting as a virulence factor. This chain is Extracellular metalloproteinase 2 (MEP2), found in Trichophyton tonsurans (Scalp ringworm fungus).